Reading from the N-terminus, the 88-residue chain is Cell division topological specificity factor (88 aa).

It belongs to the MinE family.

Its function is as follows. Prevents the cell division inhibition by proteins MinC and MinD at internal division sites while permitting inhibition at polar sites. This ensures cell division at the proper site by restricting the formation of a division septum at the midpoint of the long axis of the cell. This chain is Cell division topological specificity factor, found in Escherichia coli (strain SMS-3-5 / SECEC).